The primary structure comprises 50 residues: MLKRKTFLKKKANLQQSSLSRNLRLRRLKHRKQQQFSRHSLQFVVQEICC.

This is an uncharacterized protein from Haemophilus influenzae (strain ATCC 51907 / DSM 11121 / KW20 / Rd).